The following is a 1021-amino-acid chain: Sodium/potassium-transporting ATPase subunit alpha-1 (1021 aa).

A propeptide spanning residues 1 to 5 is cleaved from the precursor; it reads MGKGV. A compositionally biased stretch (basic and acidic residues) spans 1-11; sequence MGKGVGRDKYE. The disordered stretch occupies residues 1-36; the sequence is MGKGVGRDKYEPAAVSEHGDKKKAKKERDMDELKKE. Over 6–85 the chain is Cytoplasmic; sequence GRDKYEPAAV…NALTPPPTTP (80 aa). The residue at position 9 (lysine 9) is an N6-acetyllysine. At tyrosine 10 the chain carries Phosphotyrosine. Serine 16 bears the Phosphoserine; by PKC mark. Residue lysine 21 is modified to N6-acetyllysine. Residues 26–36 are compositionally biased toward basic and acidic residues; that stretch reads KERDMDELKKE. 2 positions are modified to phosphoserine: serine 38 and serine 45. Residues 80–82 form a phosphoinositide-3 kinase binding region; that stretch reads PPP. Residues 86–106 traverse the membrane as a helical segment; sequence EWVKFCRQLFGGFSMLLWIGA. At 107–129 the chain is on the extracellular side; that stretch reads VLCFLAYGIQAATEEEPQNDNLY. The helical transmembrane segment at 130–150 threads the bilayer; it reads LGVVLSAVVIITGCFSYYQEA. Residues 151 to 286 are Cytoplasmic-facing; it reads KSSKIMESFK…GGQTPIAAEI (136 aa). The residue at position 226 (serine 226) is a Phosphoserine. Tyrosine 258 is subject to Phosphotyrosine. A helical membrane pass occupies residues 287–306; it reads EHFIHIITGVAVFLGVSFFI. Residues 307 to 318 lie on the Extracellular side of the membrane; that stretch reads LSLILEYTWLEA. The chain crosses the membrane as a helical span at residues 319–336; it reads VIFLIGIIVANVPEGLLA. The Cytoplasmic segment spans residues 337–770; the sequence is TVTVCLTLTA…EEGRLIFDNL (434 aa). Aspartate 374 acts as the 4-aspartylphosphate intermediate in catalysis. Serine 450 and serine 482 each carry phosphoserine. Lysine 485 contacts ATP. Tyrosine 540 carries the phosphotyrosine modification. The tract at residues 594–715 is mediates interaction with SCN7A; that stretch reads RAAVPDAVGK…QGAIVAVTGD (122 aa). Phosphoserine is present on serine 666. Mg(2+)-binding residues include aspartate 715 and aspartate 719. The chain crosses the membrane as a helical span at residues 771–790; sequence KKSIAYTLTSNIPEITPFLI. Topologically, residues 791–800 are extracellular; it reads FIIANIPLPL. The helical transmembrane segment at 801-821 threads the bilayer; that stretch reads GTVTILCIDLGTDMVPAISLA. At 822–841 the chain is on the cytoplasmic side; it reads YEQAESDIMKRQPRNPQTDK. Residues 842-864 form a helical membrane-spanning segment; that stretch reads LVNERLISMAYGQIGMIQALGGF. Topologically, residues 865–916 are extracellular; sequence FTYFVIMAENGFLPNHLLGIRVTWDDRWINDVEDSYGQQWTYEQRKIVEFTC. The helical transmembrane segment at 917-936 threads the bilayer; sequence HTAFFVSIVVVQWADLVICK. The Cytoplasmic portion of the chain corresponds to 937 to 949; it reads TRRNSVFQQGMKN. Serine 941 carries the post-translational modification Phosphoserine; by PKA. The helical transmembrane segment at 950–968 threads the bilayer; the sequence is KILIFGLFEETALAAFLSY. Topologically, residues 969–983 are extracellular; the sequence is CPGMGVALRMYPLKP. A helical transmembrane segment spans residues 984–1004; the sequence is TWWFCAFPYSLLIFVYDEVRK. At 1005-1021 the chain is on the cytoplasmic side; sequence LIIRRRPGGWVEKETYY.

It belongs to the cation transport ATPase (P-type) (TC 3.A.3) family. Type IIC subfamily. In terms of assembly, the sodium/potassium-transporting ATPase is composed of a catalytic alpha subunit, an auxiliary non-catalytic beta subunit and an additional regulatory subunit. Interacts with regulatory subunit FXYD1. Interacts with regulatory subunit FXYD3. Interacts with SIK1. Interacts with SLC35G1 and STIM1. Interacts with CLN3; this interaction regulates the sodium/potassium-transporting ATPase complex localization at the plasma membrane. Interacts with SCN7A; activates ATP1A1 P-type sodium:potassium-exchanging transporter activity which indirectly signals to nearby neurons to regulate sodium homeostasis. Phosphorylation on Tyr-10 modulates pumping activity. Phosphorylation of Ser-941 by PKA modulates the response of ATP1A1 to PKC. Dephosphorylation by protein phosphatase 2A (PP2A) following increases in intracellular sodium, leading to increase catalytic activity.

Its subcellular location is the cell membrane. The protein localises to the basolateral cell membrane. The protein resides in the sarcolemma. It is found in the cell projection. It localises to the axon. Its subcellular location is the melanosome. The enzyme catalyses K(+)(out) + Na(+)(in) + ATP + H2O = K(+)(in) + Na(+)(out) + ADP + phosphate + H(+). Its function is as follows. This is the catalytic component of the active enzyme, which catalyzes the hydrolysis of ATP coupled with the exchange of sodium and potassium ions across the plasma membrane. This action creates the electrochemical gradient of sodium and potassium ions, providing the energy for active transport of various nutrients. Could also be part of an osmosensory signaling pathway that senses body-fluid sodium levels and controls salt intake behavior as well as voluntary water intake to regulate sodium homeostasis. This is Sodium/potassium-transporting ATPase subunit alpha-1 (ATP1A1) from Bos taurus (Bovine).